The following is a 149-amino-acid chain: 3-dehydroquinate dehydratase (149 aa).

The active-site Proton acceptor is Tyr-21. The substrate site is built by Asn-73, His-79, and Asp-86. The active-site Proton donor is His-99. Substrate is bound by residues 100 to 101 (LT) and Arg-110.

The protein belongs to the type-II 3-dehydroquinase family. Homododecamer.

The catalysed reaction is 3-dehydroquinate = 3-dehydroshikimate + H2O. It functions in the pathway metabolic intermediate biosynthesis; chorismate biosynthesis; chorismate from D-erythrose 4-phosphate and phosphoenolpyruvate: step 3/7. Catalyzes a trans-dehydration via an enolate intermediate. The sequence is that of 3-dehydroquinate dehydratase from Thermus thermophilus (strain ATCC BAA-163 / DSM 7039 / HB27).